Here is a 1057-residue protein sequence, read N- to C-terminus: Carbamoyl phosphate synthase large chain (1057 aa).

The tract at residues 1–401 (MPKREDINKI…ATQKAIRSLD (401 aa)) is carboxyphosphate synthetic domain. Residues R129, R169, G175, G176, Q208, I210, E215, G241, I242, H243, Q284, and E298 each contribute to the ATP site. Residues 133-327 (RALMNDLNEP…IAKVAAKIAV (195 aa)) enclose the ATP-grasp 1 domain. Mg(2+) is bound by residues Q284, E298, and N300. The Mn(2+) site is built by Q284, E298, and N300. The segment at 402-546 (IDINYIGDEE…YSTYELENES (145 aa)) is oligomerization domain. The carbamoyl phosphate synthetic domain stretch occupies residues 547-929 (IVSNRKSIVV…ALYKAFEGAK (383 aa)). In terms of domain architecture, ATP-grasp 2 spans 671–861 (NKLIQANGIR…MARLATRAIL (191 aa)). Residues R707, Q746, L748, E752, G777, V778, H779, S780, Q820, and E832 each coordinate ATP. The Mg(2+) site is built by Q820, E832, and N834. Q820, E832, and N834 together coordinate Mn(2+). One can recognise an MGS-like domain in the interval 930-1057 (MHMPDHGKVL…ESQAFTTLHL (128 aa)). Positions 930 to 1057 (MHMPDHGKVL…ESQAFTTLHL (128 aa)) are allosteric domain.

Belongs to the CarB family. In terms of assembly, composed of two chains; the small (or glutamine) chain promotes the hydrolysis of glutamine to ammonia, which is used by the large (or ammonia) chain to synthesize carbamoyl phosphate. Tetramer of heterodimers (alpha,beta)4. Mg(2+) is required as a cofactor. Mn(2+) serves as cofactor.

It catalyses the reaction hydrogencarbonate + L-glutamine + 2 ATP + H2O = carbamoyl phosphate + L-glutamate + 2 ADP + phosphate + 2 H(+). It carries out the reaction hydrogencarbonate + NH4(+) + 2 ATP = carbamoyl phosphate + 2 ADP + phosphate + 2 H(+). The protein operates within amino-acid biosynthesis; L-arginine biosynthesis; carbamoyl phosphate from bicarbonate: step 1/1. It functions in the pathway pyrimidine metabolism; UMP biosynthesis via de novo pathway; (S)-dihydroorotate from bicarbonate: step 1/3. Large subunit of the glutamine-dependent carbamoyl phosphate synthetase (CPSase). CPSase catalyzes the formation of carbamoyl phosphate from the ammonia moiety of glutamine, carbonate, and phosphate donated by ATP, constituting the first step of 2 biosynthetic pathways, one leading to arginine and/or urea and the other to pyrimidine nucleotides. The large subunit (synthetase) binds the substrates ammonia (free or transferred from glutamine from the small subunit), hydrogencarbonate and ATP and carries out an ATP-coupled ligase reaction, activating hydrogencarbonate by forming carboxy phosphate which reacts with ammonia to form carbamoyl phosphate. This is Carbamoyl phosphate synthase large chain from Pediococcus pentosaceus (strain ATCC 25745 / CCUG 21536 / LMG 10740 / 183-1w).